The following is a 106-amino-acid chain: MSQKTVHDQDNALLLETGNTKVAPPPRYQVLLLNDDYTPMDFVIVVLQQFFAMDLKKATQVMLHVHTRGRGVCGFYTREVAESKVAQVNEFSRIHQHPLLCTMKQA.

Over residues 1 to 10 the composition is skewed to basic and acidic residues; that stretch reads MSQKTVHDQD. A disordered region spans residues 1 to 23; sequence MSQKTVHDQDNALLLETGNTKVA.

This sequence belongs to the ClpS family. Binds to the N-terminal domain of the chaperone ClpA.

Its function is as follows. Involved in the modulation of the specificity of the ClpAP-mediated ATP-dependent protein degradation. In Xylella fastidiosa (strain M23), this protein is ATP-dependent Clp protease adapter protein ClpS.